Consider the following 222-residue polypeptide: Probable fructose-6-phosphate aldolase (222 aa).

Catalysis depends on K87, which acts as the Schiff-base intermediate with substrate.

The protein belongs to the transaldolase family. Type 3A subfamily.

Its subcellular location is the cytoplasm. The catalysed reaction is beta-D-fructose 6-phosphate = dihydroxyacetone + D-glyceraldehyde 3-phosphate. In terms of biological role, catalyzes the reversible formation of fructose 6-phosphate from dihydroxyacetone and D-glyceraldehyde 3-phosphate via an aldolization reaction. The sequence is that of Probable fructose-6-phosphate aldolase from Streptococcus pneumoniae (strain ATCC 700669 / Spain 23F-1).